Consider the following 449-residue polypeptide: Bifunctional protein GlmU (449 aa).

A pyrophosphorylase region spans residues 1–230 (MASSKLAVIV…EAELLGVNAR (230 aa)). Residues 11-14 (LAAG), K25, Q74, 79-80 (GT), 102-104 (YGD), G142, E156, N171, and N228 contribute to the UDP-N-acetyl-alpha-D-glucosamine site. D104 lines the Mg(2+) pocket. Residue N228 coordinates Mg(2+). A linker region spans residues 231–251 (SELAVAEALVQARLREAAMDN). An N-acetyltransferase region spans residues 252-449 (GATLIDPATV…QQAAKKAKKD (198 aa)). UDP-N-acetyl-alpha-D-glucosamine-binding residues include R317 and K335. The active-site Proton acceptor is H347. UDP-N-acetyl-alpha-D-glucosamine-binding residues include Y350 and N361. Acetyl-CoA is bound by residues A364, 370–371 (NY), S389, A407, and R424.

In the N-terminal section; belongs to the N-acetylglucosamine-1-phosphate uridyltransferase family. It in the C-terminal section; belongs to the transferase hexapeptide repeat family. Homotrimer. Requires Mg(2+) as cofactor.

It localises to the cytoplasm. The enzyme catalyses alpha-D-glucosamine 1-phosphate + acetyl-CoA = N-acetyl-alpha-D-glucosamine 1-phosphate + CoA + H(+). It carries out the reaction N-acetyl-alpha-D-glucosamine 1-phosphate + UTP + H(+) = UDP-N-acetyl-alpha-D-glucosamine + diphosphate. Its pathway is nucleotide-sugar biosynthesis; UDP-N-acetyl-alpha-D-glucosamine biosynthesis; N-acetyl-alpha-D-glucosamine 1-phosphate from alpha-D-glucosamine 6-phosphate (route II): step 2/2. It functions in the pathway nucleotide-sugar biosynthesis; UDP-N-acetyl-alpha-D-glucosamine biosynthesis; UDP-N-acetyl-alpha-D-glucosamine from N-acetyl-alpha-D-glucosamine 1-phosphate: step 1/1. It participates in bacterial outer membrane biogenesis; LPS lipid A biosynthesis. Functionally, catalyzes the last two sequential reactions in the de novo biosynthetic pathway for UDP-N-acetylglucosamine (UDP-GlcNAc). The C-terminal domain catalyzes the transfer of acetyl group from acetyl coenzyme A to glucosamine-1-phosphate (GlcN-1-P) to produce N-acetylglucosamine-1-phosphate (GlcNAc-1-P), which is converted into UDP-GlcNAc by the transfer of uridine 5-monophosphate (from uridine 5-triphosphate), a reaction catalyzed by the N-terminal domain. The chain is Bifunctional protein GlmU from Paramagnetospirillum magneticum (strain ATCC 700264 / AMB-1) (Magnetospirillum magneticum).